The following is a 366-amino-acid chain: Alanine racemase (366 aa).

The active-site Proton acceptor; specific for D-alanine is the Lys40. Lys40 is modified (N6-(pyridoxal phosphate)lysine). Position 136 (Arg136) interacts with substrate. The Proton acceptor; specific for L-alanine role is filled by Tyr263. Met310 is a binding site for substrate.

It belongs to the alanine racemase family. It depends on pyridoxal 5'-phosphate as a cofactor.

It carries out the reaction L-alanine = D-alanine. The protein operates within amino-acid biosynthesis; D-alanine biosynthesis; D-alanine from L-alanine: step 1/1. Its function is as follows. Catalyzes the interconversion of L-alanine and D-alanine. May also act on other amino acids. The chain is Alanine racemase (alr) from Streptococcus pyogenes serotype M1.